Here is a 188-residue protein sequence, read N- to C-terminus: MKGLIIVGSAKVGSHTNALAKYLVGQFDTHDLDVDIYDLAERPLNQLDFSGTTPSIDEIKTNIKDFQEKVMAADFLVLGTPNYHGSYSGILKNALDHINMDYVKMKPVGLIGNSGGIVSSEPLSHLRVIVRSLLGIAVPTQIATHDSDYSKLDDGTLYLDDDQFQLRAKLFVDQIVSFVNNSPYEHLK.

Belongs to the azoreductase type 2 family. In terms of assembly, homotetramer. FMN is required as a cofactor.

In terms of biological role, catalyzes the reductive cleavage of azo bond in aromatic azo compounds to the corresponding amines. Requires NADPH, but not NADH, as an electron donor for its activity. The chain is FMN-dependent NADPH-azoreductase (azo1) from Staphylococcus haemolyticus (strain JCSC1435).